The sequence spans 398 residues: Proteasome-activating nucleotidase (398 aa).

Residues 3–60 (DSEIQYLLEKLKKLEEDYYKLRELYRRLEDEKKFIESERIRYEREVRRLRSEVERLRS) are a coiled coil. ATP-binding positions include 185–190 (GTGKTL) and histidine 324. Positions 396 to 398 (MFV) are docks into pockets in the proteasome alpha-ring to cause gate opening.

This sequence belongs to the AAA ATPase family. As to quaternary structure, homohexamer. The hexameric complex has a two-ring architecture resembling a top hat that caps the 20S proteasome core at one or both ends. Upon ATP-binding, the C-terminus of PAN interacts with the alpha-rings of the proteasome core by binding to the intersubunit pockets.

The protein localises to the cytoplasm. ATPase which is responsible for recognizing, binding, unfolding and translocation of substrate proteins into the archaeal 20S proteasome core particle. Is essential for opening the gate of the 20S proteasome via an interaction with its C-terminus, thereby allowing substrate entry and access to the site of proteolysis. Thus, the C-termini of the proteasomal ATPase function like a 'key in a lock' to induce gate opening and therefore regulate proteolysis. Unfolding activity requires energy from ATP hydrolysis, whereas ATP binding alone promotes ATPase-20S proteasome association which triggers gate opening, and supports translocation of unfolded substrates. This chain is Proteasome-activating nucleotidase, found in Archaeoglobus fulgidus (strain ATCC 49558 / DSM 4304 / JCM 9628 / NBRC 100126 / VC-16).